Consider the following 576-residue polypeptide: Adenine deaminase 2 (576 aa).

The protein belongs to the metallo-dependent hydrolases superfamily. Adenine deaminase family. It depends on Mn(2+) as a cofactor.

The enzyme catalyses adenine + H2O + H(+) = hypoxanthine + NH4(+). The protein is Adenine deaminase 2 of Desulfotalea psychrophila (strain LSv54 / DSM 12343).